The sequence spans 457 residues: Aromatic amino acid permease FywP (457 aa).

12 helical membrane passes run 16-36, 43-63, 91-111, 114-134, 154-174, 205-225, 243-263, 292-312, 342-362, 373-393, 403-423, and 424-444; these read IVML…SGKV, SVLL…YGVG, FADW…EAGV, FLAI…VAVL, AFIK…LLVI, GFLT…LAAI, GVLI…LHLL, IVLV…IYAT, NAIL…AVLG, ISFT…VLYF, VKLA…MQII, and TNPW…YFSY.

It belongs to the amino acid-polyamine-organocation (APC) superfamily. Amino acid transporter (AAT) (TC 2.A.3.1) family.

Its subcellular location is the cell membrane. Functionally, involved in phenylalanine and tyrosine uptake. Also has affinity for tryptophan. Plays no significant role in the excretion of accumulated phenylalanine. In Lactococcus lactis subsp. cremoris (strain MG1363), this protein is Aromatic amino acid permease FywP.